The sequence spans 308 residues: Reaction center protein M chain (308 aa).

3 helical membrane-spanning segments follow: residues 54–80, 111–140, and 143–168; these read GSLG…YQAG, KEGG…RAQA, and MGKH…RPIL. (7R,8Z)-bacteriochlorophyll b is bound by residues His183 and His203. Residues 198–226 traverse the membrane as a helical segment; it reads FYNPFHGLSIAFLYGSALLFAMHGATILA. Residues His220 and Glu235 each contribute to the Fe cation site. Trp253 lines the a ubiquinone pocket. Residues 260–286 traverse the membrane as a helical segment; that stretch reads NATMEGIHRWAIWMAVLVTLTGGIGIL. Fe cation is bound at residue His267.

Belongs to the reaction center PufL/M/PsbA/D family. As to quaternary structure, reaction center is composed of four bacteriochlorophylls, two bacteriopheophytins, two ubiquinones, one iron, and three highly hydrophobic polypeptide chains (designated L, M, and H).

It is found in the cellular chromatophore membrane. In terms of biological role, the reaction center is a membrane-bound complex that mediates the initial photochemical event in the electron transfer process of photosynthesis. This is Reaction center protein M chain (pufM) from Cereibacter sphaeroides (strain ATCC 17023 / DSM 158 / JCM 6121 / CCUG 31486 / LMG 2827 / NBRC 12203 / NCIMB 8253 / ATH 2.4.1.) (Rhodobacter sphaeroides).